A 724-amino-acid chain; its full sequence is MKSAKGIENLAFVPSSPDILRRLSASPSQIEVSALSSDPQRENSQPQELQKPQEPQKSPEPSLPSAPPNVSEEKLRSLSLSEFEEGSYGWRNFHPQCLQRCNTPGGFLLHYCLLAVTQGIVVNGLVNISISTVEKRYEMKSSLTGLISSSYDISFCLLSLFVSFFGERGHKPRWLAFAAFMIGLGALVFSLPQFFSGEYKLGSLFEDTCVTTRNSTSCTSSTSSLSNYLYVFILGQLLLGAGGTPLYTLGTAFLDDSVPTHKSSLYIGTGYAMSILGPAIGYVLGGQLLTIYIDVAMGESTDVTEDDPRWLGAWWIGFLLSWIFAWSLIIPFSCFPKHLPGTAEIQAGKTSQAHQSNSNADVKFGKSIKDFPAALKNLMKNAVFMCLVLSTSSEALITTGFATFLPKFIENQFGLTSSFAATLGGAVLIPGAALGQILGGFLVSKFRMTCKNTMKFALFTSGVALTLSFVFMYAKCENEPFAGVSESYNGTGELGNLIAPCNANCNCSRSYYYPVCGDGVQYFSPCFAGCSNPVAHRKPKVYYNCSCIERKTEITSTAETFGFEAKAGKCETHCAKLPIFLCIFFIVIIFTFMAGTPITVSILRCVNHRQRSLALGIQFMVLRLLGTIPGPIIFGFTIDSTCILWDINDCGIKGACWIYDNIKMAHMLVAISVTCKVITMFFNGFAIFLYKPPPSATDVSFHKENAVVTNVLAEQDLNKIVKEG.

Topologically, residues Met1–Gly105 are cytoplasmic. Phosphoserine is present on residues Ser15, Ser16, Ser24, Ser26, and Ser28. A disordered region spans residues Ile30–Ser71. Positions Ser44 to Glu60 are enriched in low complexity. A helical transmembrane segment spans residues Gly106–Val126. Residues Asn127–Gly145 lie on the Extracellular side of the membrane. Residues Leu146–Gly166 form a helical membrane-spanning segment. The Cytoplasmic portion of the chain corresponds to Glu167–Pro172. The chain crosses the membrane as a helical span at residues Arg173–Gly197. The Extracellular segment spans residues Glu198–Ser223. Residues Ser224–Leu254 form a helical membrane-spanning segment. Over Asp255–Ser274 the chain is Cytoplasmic. A helical transmembrane segment spans residues Ile275–Val295. At Ala296–Leu311 the chain is on the extracellular side. A helical membrane pass occupies residues Gly312 to Pro336. Over Lys337–Asn377 the chain is Cytoplasmic. The helical transmembrane segment at Leu378–Thr399 threads the bilayer. The Extracellular portion of the chain corresponds to Gly400 to Phe419. Residues Ala420–Val443 form a helical membrane-spanning segment. The Cytoplasmic segment spans residues Ser444–Arg447. The chain crosses the membrane as a helical span at residues Met448–Phe471. Residues Met472–Phe580 are Extracellular-facing. A Kazal-like domain is found at Gly495–Glu549. Disulfide bonds link Cys501/Cys530, Cys507/Cys526, and Cys516/Cys547. Residues Leu581–Leu603 traverse the membrane as a helical segment. At Arg604–Ser612 the chain is on the cytoplasmic side. A helical membrane pass occupies residues Leu613–Ile638. The Extracellular segment spans residues Asp639 to Ser672. A helical transmembrane segment spans residues Val673–Tyr690. Residues Lys691–Gly724 lie on the Cytoplasmic side of the membrane.

Belongs to the organo anion transporter (TC 2.A.60) family. In terms of tissue distribution, predominantly expressed in kidney but also weakly expressed in both fetal liver and kidney.

The protein localises to the basolateral cell membrane. The catalysed reaction is estrone 3-sulfate(out) = estrone 3-sulfate(in). It catalyses the reaction L-thyroxine(out) = L-thyroxine(in). The enzyme catalyses 3,3',5-triiodo-L-thyronine(out) = 3,3',5-triiodo-L-thyronine(in). It carries out the reaction chenodeoxycholate(out) = chenodeoxycholate(in). The catalysed reaction is glycocholate(out) = glycocholate(in). It catalyses the reaction L-homoarginine(in) = L-homoarginine(out). The enzyme catalyses L-arginine(in) = L-arginine(out). It carries out the reaction N(omega),N(omega)-dimethyl-L-arginine(out) = N(omega),N(omega)-dimethyl-L-arginine(in). Its function is as follows. Mediates the transport of organic anions such as steroids (estrone 3-sulfate, chenodeoxycholate, glycocholate) and thyroid hormones (3,3',5-triiodo-L-thyronine (T3), L-thyroxine (T4)), in the kidney. Capable of transporting cAMP and pharmacological substances such as digoxin, ouabain and methotrexate. Transport is independent of sodium, chloride ion, and ATP. Transport activity is stimulated by an acidic extracellular environment due to increased substrate affinity to the transporter. The driving force for this transport activity is currently not known. The role of hydrogencarbonate (HCO3(-), bicarbonate) as the probable counteranion that exchanges for organic anions is still not well defined. Functions as an uptake transporter at the apical membrane, suggesting a role in renal reabsorption. Involved in the renal secretion of the uremic toxin ADMA (N(omega),N(omega)-dimethyl-L-arginine or asymmetrical dimethylarginine), which is associated to cardiovascular events and mortality, and the structurally related amino acids L-arginine and L-homoarginine (a cardioprotective biomarker). Can act bidirectionally, suggesting a dual protective role of this transport protein; exporting L-homoarginine after being synthesized in proximal tubule cells, and mediating uptake of ADMA from the blood into proximal tubule cells where it is degraded by the enzyme dimethylarginine dimethylaminohydrolase 1 (DDAH1). May be involved in sperm maturation by enabling directed movement of organic anions and compounds within or between cells. This ion-transporting process is important to maintain the strict epididymal homeostasis necessary for sperm maturation. May have a role in secretory functions since seminal vesicle epithelial cells are assumed to secrete proteins involved in decapacitation by modifying surface proteins to facilitate the acquisition of the ability to fertilize the egg. In Homo sapiens (Human), this protein is Solute carrier organic anion transporter family member 4C1.